The primary structure comprises 122 residues: Large ribosomal subunit protein uL14c (122 aa).

It belongs to the universal ribosomal protein uL14 family. Part of the 50S ribosomal subunit.

The protein resides in the plastid. Its subcellular location is the chloroplast. Functionally, binds to 23S rRNA. In Panax ginseng (Korean ginseng), this protein is Large ribosomal subunit protein uL14c.